We begin with the raw amino-acid sequence, 310 residues long: Ribosomal RNA small subunit methyltransferase H (310 aa).

S-adenosyl-L-methionine contacts are provided by residues 32 to 34, D51, F78, D99, and Q106; that span reads AGH. The tract at residues 290–310 is disordered; it reads GELEDNRRSRSAKLRVAEKQK.

Belongs to the methyltransferase superfamily. RsmH family.

The protein resides in the cytoplasm. The enzyme catalyses cytidine(1402) in 16S rRNA + S-adenosyl-L-methionine = N(4)-methylcytidine(1402) in 16S rRNA + S-adenosyl-L-homocysteine + H(+). Functionally, specifically methylates the N4 position of cytidine in position 1402 (C1402) of 16S rRNA. This Exiguobacterium sp. (strain ATCC BAA-1283 / AT1b) protein is Ribosomal RNA small subunit methyltransferase H.